The primary structure comprises 557 residues: MKEEEQRTAMSFIDTTIKMRKEANAKKVVLAWGLLNVSLAGMIYTEMTGKMISTYYNITYWPLWYIELALASLFSLNALFDFWRYFKYTMTSPNITLSPSQQKLLGVPYSSAQSSPPRDLITNKVPASTPSPSMQGQNVLSYSPSRSPSSSPKFSPSCISGYSPQIQAMLPSSGSPFTSVVSYSSNSFPKITSYSSSPGSSQYPSNLGPVEGGLRSRYRSSPSTYSSPTDKEDYMTDLKLLDTFLRSEEEKQHRVQLGSPDSSSTAASPTFWNYSRSVGDYAHTLRKFQYQLACRSQAPSAHKDEADLGSKHAAEEVWGKVTMNRQLLDHMDAWTAKFRNWVNETILVPLVHEVDSVNTQMRRLGCPELQIGESSISSLKQAALVKAPLIPTLHIIVQYLDITPNQEYLYERLKELSHGGCMSSFRWNSGGDFKGRKWDTDLPTDSAIVMHIFCTYLDSRLPPHPKYPDGKTFTSQHFVQTPDKPDTSNENVFCIHQSNVNPPYYELVYQKHITBRNNLFHTLLMFLYIIKTKESGMLGRVNLGLSGVNILWIFGDH.

The helical transmembrane segment at 28-48 (VVLAWGLLNVSLAGMIYTEMT) threads the bilayer. Residue asparagine 57 is glycosylated (N-linked (GlcNAc...) asparagine). The helical transmembrane segment at 60 to 80 (YWPLWYIELALASLFSLNALF) threads the bilayer. Disordered regions lie at residues 108–156 (PYSS…KFSP) and 194–232 (YSSS…TDKE). The span at 125–140 (VPASTPSPSMQGQNVL) shows a compositional bias: polar residues. 3 stretches are compositionally biased toward low complexity: residues 141–156 (SYSP…KFSP), 194–205 (YSSSPGSSQYPS), and 219–228 (RSSPSTYSSP). N-linked (GlcNAc...) asparagine glycans are attached at residues asparagine 273 and asparagine 343.

The protein localises to the membrane. The protein resides in the nucleus envelope. Its subcellular location is the golgi apparatus. It is found in the cytoplasm. The protein is Transmembrane protein 209 (tmem209) of Xenopus tropicalis (Western clawed frog).